The chain runs to 458 residues: Cysteine--tRNA ligase (458 aa).

Zn(2+) is bound at residue C29. A 'HIGH' region motif is present at residues 31 to 41 (PTVYDNPHIGN). Zn(2+) contacts are provided by C214, H239, and E243. Residues 272–276 (KMSKS) carry the 'KMSKS' region motif. K275 is an ATP binding site.

The protein belongs to the class-I aminoacyl-tRNA synthetase family. Monomer. The cofactor is Zn(2+).

The protein localises to the cytoplasm. The catalysed reaction is tRNA(Cys) + L-cysteine + ATP = L-cysteinyl-tRNA(Cys) + AMP + diphosphate. This chain is Cysteine--tRNA ligase, found in Rickettsia bellii (strain OSU 85-389).